Reading from the N-terminus, the 670-residue chain is ATP synthase subunit alpha 2 (670 aa).

ATP is bound at residue 180–187 (GDRATGKT). Positions 525-670 (MPAEDAAGDI…DAEAEARHKR (146 aa)) are disordered. The segment covering 543-588 (ARGDADRDADHGANREVSREVSPEASREVSREVSREVSHEADRDAA) has biased composition (basic and acidic residues). Over residues 589–599 (ADAARVAGRAP) the composition is skewed to low complexity. The span at 621–639 (ADGDRASASRPPPDARGDA) shows a compositional bias: basic and acidic residues. A compositionally biased stretch (low complexity) spans 650-661 (ADANVNADANVD).

Belongs to the ATPase alpha/beta chains family. As to quaternary structure, F-type ATPases have 2 components, CF(1) - the catalytic core - and CF(0) - the membrane proton channel. CF(1) has five subunits: alpha(3), beta(3), gamma(1), delta(1), epsilon(1). CF(0) has three main subunits: a(1), b(2) and c(9-12). The alpha and beta chains form an alternating ring which encloses part of the gamma chain. CF(1) is attached to CF(0) by a central stalk formed by the gamma and epsilon chains, while a peripheral stalk is formed by the delta and b chains.

Its subcellular location is the cell inner membrane. The enzyme catalyses ATP + H2O + 4 H(+)(in) = ADP + phosphate + 5 H(+)(out). Its function is as follows. Produces ATP from ADP in the presence of a proton gradient across the membrane. The alpha chain is a regulatory subunit. The chain is ATP synthase subunit alpha 2 from Burkholderia mallei (strain NCTC 10247).